Reading from the N-terminus, the 169-residue chain is UPF0725 protein At2g19200 (169 aa).

It belongs to the UPF0725 (EMB2204) family.

In Arabidopsis thaliana (Mouse-ear cress), this protein is UPF0725 protein At2g19200.